Consider the following 168-residue polypeptide: Peptidoglycan-associated lipoprotein (168 aa).

An N-terminal signal peptide occupies residues 1 to 24 (MRRIQSIARSPIAIALFMSLAVAG). Cysteine 25 carries the N-palmitoyl cysteine lipid modification. A lipid anchor (S-diacylglycerol cysteine) is attached at cysteine 25. An OmpA-like domain is found at 51-167 (QDFTVNVGDR…RAVTVLNGAG (117 aa)).

Belongs to the Pal lipoprotein family. As to quaternary structure, the Tol-Pal system is composed of five core proteins: the inner membrane proteins TolA, TolQ and TolR, the periplasmic protein TolB and the outer membrane protein Pal. They form a network linking the inner and outer membranes and the peptidoglycan layer. Post-translationally, the N-terminus is blocked.

It is found in the cell outer membrane. Functionally, part of the Tol-Pal system, which plays a role in outer membrane invagination during cell division and is important for maintaining outer membrane integrity. The sequence is that of Peptidoglycan-associated lipoprotein from Brucella abortus biovar 1 (strain 9-941).